A 447-amino-acid chain; its full sequence is Phosphoglucosamine mutase (447 aa).

Serine 106 functions as the Phosphoserine intermediate in the catalytic mechanism. Residues serine 106, aspartate 245, aspartate 247, and aspartate 249 each coordinate Mg(2+). Serine 106 is subject to Phosphoserine.

Belongs to the phosphohexose mutase family. The cofactor is Mg(2+). In terms of processing, activated by phosphorylation.

The catalysed reaction is alpha-D-glucosamine 1-phosphate = D-glucosamine 6-phosphate. In terms of biological role, catalyzes the conversion of glucosamine-6-phosphate to glucosamine-1-phosphate. The chain is Phosphoglucosamine mutase from Cupriavidus metallidurans (strain ATCC 43123 / DSM 2839 / NBRC 102507 / CH34) (Ralstonia metallidurans).